The sequence spans 345 residues: MDAISKTERRKQSLSVVLSTYGPGLLVTAAVAMAAQFLSEHYGAPAMLMALLLGIAFHFLAEEGRCVAGIELSAKLVLRIGVALLGMRISVDLLIGLGGGTILLLVSAIVATILFGLVAARLLGRGWRLALLTSGAVAICGASAAMAIAAVLPRNEFSERNLIFTVLSVTVLSTLAMIGYPIVAEYLGLDGQATGIFFGGTIHDVAQVVGAGFSVSPEAGETATLVKLIRVTMLAPVVLIFSLVLRSVPQEGASIGKRAPLVPGFVLAFLVLAGFNSAGLVPVLASEVGMAISRWALLAGIVAVGMKTSLRRVLEVGGDAVALVVAETLFIAVFILAGMYYLGHS.

Transmembrane regions (helical) follow at residues 13 to 32 (SLSVVLSTYGPGLLVTAAVA), 42 to 61 (YGAPAMLMALLLGIAFHFLA), 93 to 115 (LLIGLGGGTILLLVSAIVATILF), 130 to 152 (ALLTSGAVAICGASAAMAIAAVL), 161 to 183 (NLIFTVLSVTVLSTLAMIGYPIV), 193 to 215 (ATGIFFGGTIHDVAQVVGAGFSV), 228 to 247 (LIRVTMLAPVVLIFSLVLRS), 262 to 284 (VPGFVLAFLVLAGFNSAGLVPVL), 291 to 310 (AISRWALLAGIVAVGMKTSL), and 320 to 342 (AVALVVAETLFIAVFILAGMYYL).

It belongs to the UPF0324 family.

Its subcellular location is the cell membrane. This is UPF0324 membrane protein RB0971 from Rhizobium meliloti (strain 1021) (Ensifer meliloti).